A 258-amino-acid polypeptide reads, in one-letter code: Phosphate import ATP-binding protein PstB 1 (258 aa).

The 243-residue stretch at 5–247 (LDLTDVNIYY…EKIFSNPNQK (243 aa)) folds into the ABC transporter domain. Residue 37-44 (GPSGCGKT) coordinates ATP.

This sequence belongs to the ABC transporter superfamily. Phosphate importer (TC 3.A.1.7) family. As to quaternary structure, the complex is composed of two ATP-binding proteins (PstB), two transmembrane proteins (PstC and PstA) and a solute-binding protein (PstS).

It is found in the cell membrane. The catalysed reaction is phosphate(out) + ATP + H2O = ADP + 2 phosphate(in) + H(+). Part of the ABC transporter complex PstSACB involved in phosphate import. Responsible for energy coupling to the transport system. This is Phosphate import ATP-binding protein PstB 1 from Mycobacterium bovis (strain ATCC BAA-935 / AF2122/97).